The primary structure comprises 172 residues: Antibacterial protein PR-39 (172 aa).

The N-terminal stretch at 1-29 is a signal peptide; the sequence is METQRASLCLGRWSLWLLLLGLVVPSASA. Glutamine 30 carries the post-translational modification Pyrrolidone carboxylic acid. Positions 30–130 are excised as a propeptide; the sequence is QALSYREAVL…DISCNEIQSV (101 aa). The tract at residues 61–80 is disordered; sequence DQPPKADEDPGTPKPVSFTV. Disulfide bonds link cysteine 85–cysteine 96 and cysteine 107–cysteine 124. The tract at residues 130–172 is disordered; the sequence is VRRRPRPPYLPRPRPPPFFPPRLPPRIPPGFPPRFPPRFPGKR. The span at 136–172 shows a compositional bias: pro residues; the sequence is PPYLPRPRPPPFFPPRLPPRIPPGFPPRFPPRFPGKR. At proline 169 the chain carries Proline amide.

This sequence belongs to the cathelicidin family. In terms of tissue distribution, small intestine and bone marrow.

It localises to the secreted. In terms of biological role, exerts a potent antimicrobial activity against both E.coli and B.megaterium. This Sus scrofa (Pig) protein is Antibacterial protein PR-39 (PR39).